Consider the following 82-residue polypeptide: Mitotic-spindle organizing protein 1 (82 aa).

N-acetylalanine is present on Ala-2.

This sequence belongs to the MOZART1 family. In terms of assembly, associates with the gamma-tubulin ring complex (gTuRC) consisting of TUBGCP2, TUBGCP3, TUBGCP4, TUBGCP5 and TUBGCP6 and gamma-tubulin TUBG1 or TUBG2; within the complex, interacts with TUBGCP3 and TUBGCP6 to form a luminal bridge with actin that stabilizes the initial structure during complex assembly. Interacts with TUBG1.

The protein localises to the cytoplasm. It is found in the cytoskeleton. The protein resides in the microtubule organizing center. It localises to the centrosome. Its subcellular location is the spindle. Its function is as follows. Required for the recruitment and the assembly of the gamma-tubulin ring complex (gTuRC) at the centrosome. The gTuRC regulates the minus-end nucleation of alpha-beta tubulin heterodimers that grow into microtubule protafilaments, a critical step in centrosome duplication and spindle formation. This Homo sapiens (Human) protein is Mitotic-spindle organizing protein 1 (MZT1).